The sequence spans 504 residues: Kinesin light chain 3 (504 aa).

Positions 90-150 (ALSAHVGALE…EEEKRHLEFL (61 aa)) form a coiled coil. The disordered stretch occupies residues 153-197 (LRQYDPPAESQQSESPPRRDSLASLFPSEEEERKGPEAAGAAAAQ). Over residues 158–167 (PPAESQQSES) the composition is skewed to low complexity. S173 carries the post-translational modification Phosphoserine. TPR repeat units lie at residues 207 to 240 (LRTL…LERS), 249 to 282 (ATML…REQT), 291 to 324 (AATL…REKV), 333 to 366 (AKQL…YEAL), and 375 to 408 (AKTK…EDLP). The disordered stretch occupies residues 411-438 (LGAPNTGTAGDAEQALRRSSSLSKIRES). The residue at position 466 (S466) is a Phosphoserine. Phosphothreonine is present on T498. A Phosphoserine modification is found at S502.

Belongs to the kinesin light chain family. As to quaternary structure, oligomer composed of two heavy chains and two light chains. Associates with microtubulin in an ATP-dependent manner. Interacts with KIF5C. Interacts with ODF1. Interacts with LRGUK. Interacts with VDAC2.

It localises to the cytoplasm. The protein resides in the cytoskeleton. It is found in the mitochondrion. Its function is as follows. Kinesin is a microtubule-associated force-producing protein that may play a role in organelle transport. Plays a role during spermiogenesis in the development of the sperm tail midpiece and in the normal function of spermatozoa. May play a role in the formation of the mitochondrial sheath formation in the developing spermatid midpiece. This Pongo abelii (Sumatran orangutan) protein is Kinesin light chain 3 (KLC3).